A 273-amino-acid chain; its full sequence is 4-hydroxy-tetrahydrodipicolinate reductase (273 aa).

NAD(+) contacts are provided by residues Gly-12–Met-17 and Glu-38. Arg-39 serves as a coordination point for NADP(+). NAD(+) contacts are provided by residues Gly-102 to Thr-104 and Ala-126 to Phe-129. His-159 functions as the Proton donor/acceptor in the catalytic mechanism. Residue His-160 participates in (S)-2,3,4,5-tetrahydrodipicolinate binding. Residue Lys-163 is the Proton donor of the active site. Gly-169–Thr-170 is a (S)-2,3,4,5-tetrahydrodipicolinate binding site.

This sequence belongs to the DapB family. Homotetramer.

Its subcellular location is the cytoplasm. The catalysed reaction is (S)-2,3,4,5-tetrahydrodipicolinate + NAD(+) + H2O = (2S,4S)-4-hydroxy-2,3,4,5-tetrahydrodipicolinate + NADH + H(+). It catalyses the reaction (S)-2,3,4,5-tetrahydrodipicolinate + NADP(+) + H2O = (2S,4S)-4-hydroxy-2,3,4,5-tetrahydrodipicolinate + NADPH + H(+). The protein operates within amino-acid biosynthesis; L-lysine biosynthesis via DAP pathway; (S)-tetrahydrodipicolinate from L-aspartate: step 4/4. Its function is as follows. Catalyzes the conversion of 4-hydroxy-tetrahydrodipicolinate (HTPA) to tetrahydrodipicolinate. This chain is 4-hydroxy-tetrahydrodipicolinate reductase, found in Photorhabdus laumondii subsp. laumondii (strain DSM 15139 / CIP 105565 / TT01) (Photorhabdus luminescens subsp. laumondii).